Here is a 720-residue protein sequence, read N- to C-terminus: Catalase-peroxidase (720 aa).

Positions 82–207 (WHSAGTYRTF…LGNTVMGLIY (126 aa)) form a cross-link, tryptophyl-tyrosyl-methioninium (Trp-Tyr) (with M-233). H83 (proton acceptor) is an active-site residue. A cross-link (tryptophyl-tyrosyl-methioninium (Tyr-Met) (with W-82)) is located at residues 207–233 (YVNPEGPNGEPDLEGSAKNIRESFGKM). H248 provides a ligand contact to heme b.

Belongs to the peroxidase family. Peroxidase/catalase subfamily. Homodimer or homotetramer. The cofactor is heme b. Post-translationally, formation of the three residue Trp-Tyr-Met cross-link is important for the catalase, but not the peroxidase activity of the enzyme.

The enzyme catalyses H2O2 + AH2 = A + 2 H2O. It catalyses the reaction 2 H2O2 = O2 + 2 H2O. Its function is as follows. Bifunctional enzyme with both catalase and broad-spectrum peroxidase activity. The protein is Catalase-peroxidase of Halobacterium salinarum (strain ATCC 29341 / DSM 671 / R1).